Consider the following 57-residue polypeptide: Lantibiotic nukacin (57 aa).

A propeptide spanning residues 1 to 30 (MENSKVMKDIEVANLLEEVQEDELNEVLGA) is cleaved from the precursor. The segment at residues 39–44 (TVSHDC) is a cross-link (beta-methyllanthionine (Thr-Cys)). Cross-links (lanthionine (Ser-Cys)) lie at residues 41-55 (SHDC…VFTC) and 48-56 (SFQFVFTCC). Residue Thr-54 is modified to 2,3-didehydrobutyrine.

Post-translationally, maturation of lantibiotics involves the enzymatic conversion of Thr, and Ser into dehydrated AA and the formation of thioether bonds with cysteine. This is followed by membrane translocation and cleavage of the modified precursor.

Its subcellular location is the secreted. Its function is as follows. Lanthionine-containing peptide antibiotic (lantibiotic) active on Gram-positive bacteria. The bactericidal activity of lantibiotics is based on depolarization of energized bacterial cytoplasmic membranes, initiated by the formation of aqueous transmembrane pores. This is Lantibiotic nukacin from Staphylococcus simulans.